Reading from the N-terminus, the 396-residue chain is E3 ubiquitin-protein ligase NHLRC1 (396 aa).

The RING-type zinc finger occupies 23 to 69 (CKVCFERFGHRQQRRPRNLPCGHVVCLACVAALAHPRTLALECPFCR). NHL repeat units follow at residues 110–154 (ALTC…FDSG), 158–201 (AHQF…FDFF), 202–242 (GQIK…LEAD), 245–298 (EGVL…FNSS), 299–347 (MQLI…LGKP), and 348–391 (EEFP…FKVM).

As to quaternary structure, interacts with AGL. Interacts (via the NHL repeats) with EPM2A/laforin. Forms a complex with EPM2A/laforin and HSP70.

Its subcellular location is the endoplasmic reticulum. The protein resides in the nucleus. The catalysed reaction is S-ubiquitinyl-[E2 ubiquitin-conjugating enzyme]-L-cysteine + [acceptor protein]-L-lysine = [E2 ubiquitin-conjugating enzyme]-L-cysteine + N(6)-ubiquitinyl-[acceptor protein]-L-lysine.. Its pathway is protein modification; protein ubiquitination. Functionally, E3 ubiquitin-protein ligase. Together with the phosphatase EPM2A/laforin, appears to be involved in the clearance of toxic polyglucosan and protein aggregates via multiple pathways. In complex with EPM2A/laforin and HSP70, suppresses the cellular toxicity of misfolded proteins by promoting their degradation through the ubiquitin-proteasome system (UPS). Ubiquitinates the glycogen-targeting protein phosphatase subunits PPP1R3C/PTG and PPP1R3D in a laforin-dependent manner and targets them for proteasome-dependent degradation, thus decreasing glycogen accumulation. Polyubiquitinates EPM2A/laforin and ubiquitinates AGL and targets them for proteasome-dependent degradation. Also promotes proteasome-independent protein degradation through the macroautophagy pathway. This chain is E3 ubiquitin-protein ligase NHLRC1 (Nhlrc1), found in Rattus norvegicus (Rat).